Consider the following 291-residue polypeptide: 4-diphosphocytidyl-2-C-methyl-D-erythritol kinase (291 aa).

Residue K11 is part of the active site. 97 to 107 is a binding site for ATP; that stretch reads PVAAGIGGGSS. The active site involves D139.

It belongs to the GHMP kinase family. IspE subfamily.

It catalyses the reaction 4-CDP-2-C-methyl-D-erythritol + ATP = 4-CDP-2-C-methyl-D-erythritol 2-phosphate + ADP + H(+). Its pathway is isoprenoid biosynthesis; isopentenyl diphosphate biosynthesis via DXP pathway; isopentenyl diphosphate from 1-deoxy-D-xylulose 5-phosphate: step 3/6. Its function is as follows. Catalyzes the phosphorylation of the position 2 hydroxy group of 4-diphosphocytidyl-2C-methyl-D-erythritol. This Methylorubrum extorquens (strain PA1) (Methylobacterium extorquens) protein is 4-diphosphocytidyl-2-C-methyl-D-erythritol kinase.